The sequence spans 379 residues: Tryptophan 2,3-dioxygenase (379 aa).

Substrate-binding positions include 57–61 (FIITH) and arginine 128. Histidine 312 serves as a coordination point for heme. Threonine 327 lines the substrate pocket.

Belongs to the tryptophan 2,3-dioxygenase family. Homotetramer. Dimer of dimers. Heme serves as cofactor.

The catalysed reaction is L-tryptophan + O2 = N-formyl-L-kynurenine. It participates in amino-acid degradation; L-tryptophan degradation via kynurenine pathway; L-kynurenine from L-tryptophan: step 1/2. Its pathway is pigment biosynthesis; ommochrome biosynthesis. Functionally, heme-dependent dioxygenase that catalyzes the oxidative cleavage of the L-tryptophan (L-Trp) pyrrole ring and converts L-tryptophan to N-formyl-L-kynurenine. Catalyzes the oxidative cleavage of the indole moiety. In Drosophila erecta (Fruit fly), this protein is Tryptophan 2,3-dioxygenase.